A 96-amino-acid chain; its full sequence is ATP synthase subunit c (96 aa).

A run of 2 helical transmembrane segments spans residues 28-50 and 75-95; these read LGAG…NIGA and AVTE…LFVL.

Belongs to the ATPase C chain family. F-type ATPases have 2 components, F(1) - the catalytic core - and F(0) - the membrane proton channel. F(1) has five subunits: alpha(3), beta(3), gamma(1), delta(1), epsilon(1). F(0) has three main subunits: a(1), b(2) and c(10-14). The alpha and beta chains form an alternating ring which encloses part of the gamma chain. F(1) is attached to F(0) by a central stalk formed by the gamma and epsilon chains, while a peripheral stalk is formed by the delta and b chains.

It is found in the cell inner membrane. In terms of biological role, f(1)F(0) ATP synthase produces ATP from ADP in the presence of a proton or sodium gradient. F-type ATPases consist of two structural domains, F(1) containing the extramembraneous catalytic core and F(0) containing the membrane proton channel, linked together by a central stalk and a peripheral stalk. During catalysis, ATP synthesis in the catalytic domain of F(1) is coupled via a rotary mechanism of the central stalk subunits to proton translocation. Key component of the F(0) channel; it plays a direct role in translocation across the membrane. A homomeric c-ring of between 10-14 subunits forms the central stalk rotor element with the F(1) delta and epsilon subunits. The sequence is that of ATP synthase subunit c from Petrotoga mobilis (strain DSM 10674 / SJ95).